Here is a 321-residue protein sequence, read N- to C-terminus: Transaldolase (321 aa).

Lysine 132 acts as the Schiff-base intermediate with substrate in catalysis.

This sequence belongs to the transaldolase family. Type 1 subfamily. In terms of assembly, homodimer.

It localises to the cytoplasm. It carries out the reaction D-sedoheptulose 7-phosphate + D-glyceraldehyde 3-phosphate = D-erythrose 4-phosphate + beta-D-fructose 6-phosphate. It participates in carbohydrate degradation; pentose phosphate pathway; D-glyceraldehyde 3-phosphate and beta-D-fructose 6-phosphate from D-ribose 5-phosphate and D-xylulose 5-phosphate (non-oxidative stage): step 2/3. Transaldolase is important for the balance of metabolites in the pentose-phosphate pathway. The chain is Transaldolase from Agrobacterium fabrum (strain C58 / ATCC 33970) (Agrobacterium tumefaciens (strain C58)).